Consider the following 155-residue polypeptide: Small ribosomal subunit protein uS7cz/uS7cy (155 aa).

It belongs to the universal ribosomal protein uS7 family. Part of the 30S ribosomal subunit.

The protein localises to the plastid. It localises to the chloroplast. Functionally, one of the primary rRNA binding proteins, it binds directly to 16S rRNA where it nucleates assembly of the head domain of the 30S subunit. This Jasminum nudiflorum (Winter jasmine) protein is Small ribosomal subunit protein uS7cz/uS7cy (rps7-A).